The primary structure comprises 55 residues: Large ribosomal subunit protein bL33 (55 aa).

This sequence belongs to the bacterial ribosomal protein bL33 family.

This is Large ribosomal subunit protein bL33 from Escherichia coli (strain K12 / DH10B).